A 415-amino-acid chain; its full sequence is Small RNA 2'-O-methyltransferase (415 aa).

Positions 99 and 117 each coordinate S-adenosyl-L-methionine. Positions 169, 172, and 173 each coordinate Mg(2+).

This sequence belongs to the methyltransferase superfamily. HEN1 family. Mg(2+) is required as a cofactor.

Its subcellular location is the cytoplasm. The catalysed reaction is small RNA 3'-end nucleotide + S-adenosyl-L-methionine = small RNA 3'-end 2'-O-methylnucleotide + S-adenosyl-L-homocysteine + H(+). Its function is as follows. Methyltransferase that adds a 2'-O-methyl group at the 3'-end of piRNAs, a class of 24 to 30 nucleotide RNAs that are generated by a Dicer-independent mechanism and are primarily derived from transposons and other repeated sequence elements. This probably protects the 3'-end of piRNAs from uridylation activity and subsequent degradation. Stabilization of piRNAs is essential for gametogenesis. The sequence is that of Small RNA 2'-O-methyltransferase from Bombyx mori (Silk moth).